A 296-amino-acid polypeptide reads, in one-letter code: MKNGTIQQSLSGFYDIWSGGKLYRTRARGNFRKRGLKPVVGDQVEFEAENQREGYLLKILPRKNQLVRPMVANVDLAVVVTAVKEPNLSTNLLDRQLVALESQGIDPVIYFSKTDLLSDQEADALMLVVKGYQMIGYPVLYQRPPFGEEALGELRKILTGKVVTMMGQTGAGKSTLLNHLAPDLNLATGEISQALKRGRHTTRKVSLMQVGDALIADTPGFSSYEDFQMTVEELPHFFPEMQALAPECKFRGCLHIKEPSCAVKNALKHGKIMNSRYDNYLQFHELIANQKPNYQK.

One can recognise a CP-type G domain in the interval 63-224; that stretch reads KNQLVRPMVA…IADTPGFSSY (162 aa). GTP-binding positions include 112 to 115 and 167 to 175; these read SKTD and GQTGAGKST. The Zn(2+) site is built by C248, C253, H255, and C261.

The protein belongs to the TRAFAC class YlqF/YawG GTPase family. RsgA subfamily. In terms of assembly, monomer. Associates with 30S ribosomal subunit, binds 16S rRNA. Zn(2+) serves as cofactor.

It localises to the cytoplasm. In terms of biological role, one of several proteins that assist in the late maturation steps of the functional core of the 30S ribosomal subunit. Helps release RbfA from mature subunits. May play a role in the assembly of ribosomal proteins into the subunit. Circularly permuted GTPase that catalyzes slow GTP hydrolysis, GTPase activity is stimulated by the 30S ribosomal subunit. The protein is Small ribosomal subunit biogenesis GTPase RsgA of Limosilactobacillus fermentum (strain NBRC 3956 / LMG 18251) (Lactobacillus fermentum).